Consider the following 144-residue polypeptide: Large ribosomal subunit protein uL16 (144 aa).

The protein belongs to the universal ribosomal protein uL16 family. As to quaternary structure, part of the 50S ribosomal subunit.

Binds 23S rRNA and is also seen to make contacts with the A and possibly P site tRNAs. This is Large ribosomal subunit protein uL16 from Halothermothrix orenii (strain H 168 / OCM 544 / DSM 9562).